A 242-amino-acid polypeptide reads, in one-letter code: MTHVCSVILIRRSFDIYHEQQKISLHNESILLLEKNLADDFAFCSPDTRRLDIDELTVCHYLQNIRQLPRNLGLHSKDRLLINQSPPMPLVTAIFDSFNESGVNSPILSNMLYLSCLSMFSHKKELIPLLFNSISTVSGKVERLISFDIAKRWYLRDIAERMYTSESLIKKKLQDENTCFSKILLASRMSMARRLLELRQIPLHTIAEKCGYSSTSYFINTFRQYYGVTPHQFAQHSPGTFS.

In terms of domain architecture, HTH araC/xylS-type spans 139–236; sequence GKVERLISFD…GVTPHQFAQH (98 aa). DNA-binding regions (H-T-H motif) lie at residues 156–177 and 203–226; these read RDIA…QDEN and LHTI…RQYY.

In terms of assembly, homodimer.

In terms of biological role, depending on the conditions (growth phase and medium), acts as a positive or negative regulator of gadA and gadBC. Repression occurs directly or via the repression of the expression of gadX. Activation occurs directly by the binding of GadW to the gadA and gadBC promoters. The polypeptide is HTH-type transcriptional regulator GadW (gadW) (Escherichia coli (strain K12)).